We begin with the raw amino-acid sequence, 378 residues long: Histone deacetylase 8 (378 aa).

Positions 15 to 325 (RSVVYVYSPE…WTYLTGTVLG (311 aa)) are histone deacetylase. Asp102 serves as a coordination point for substrate. Residue His144 is the Proton acceptor of the active site. Gly152 is a binding site for substrate. The a divalent metal cation site is built by Asp179, His181, and Asp268. Tyr307 contributes to the substrate binding site.

The protein belongs to the histone deacetylase family. HD type 1 subfamily. A divalent metal cation is required as a cofactor.

It is found in the nucleus. Its subcellular location is the chromosome. It localises to the cytoplasm. The enzyme catalyses N(6)-acetyl-L-lysyl-[histone] + H2O = L-lysyl-[histone] + acetate. It catalyses the reaction N(6)-acetyl-L-lysyl-[protein] + H2O = L-lysyl-[protein] + acetate. It carries out the reaction N(6)-(2E)-butenoyl-L-lysyl-[protein] + H2O = (2E)-2-butenoate + L-lysyl-[protein]. Its activity is regulated as follows. Its activity is inhibited by trichostatin A (TSA) and butyrate, 2 well known histone deacetylase inhibitors. Functionally, histone deacetylase that catalyzes the deacetylation of lysine residues on the N-terminal part of the core histones (H2A, H2B, H3 and H4). Histone deacetylation gives a tag for epigenetic repression and plays an important role in transcriptional regulation, cell cycle progression and developmental events. Histone deacetylases act via the formation of large multiprotein complexes. Also involved in the deacetylation of non-histone proteins. In addition to protein deacetylase activity, also has protein-lysine deacylase activity: acts as a protein decrotonylase by mediating decrotonylation ((2E)-butenoyl) of histones. This chain is Histone deacetylase 8 (hdac8), found in Danio rerio (Zebrafish).